A 452-amino-acid chain; its full sequence is Mitochondrial distribution and morphology protein 10 (452 aa).

The interval 105-130 (PLAPESWDSDGPGHEGSDGQEDETTP) is disordered.

Belongs to the MDM10 family. Component of the ER-mitochondria encounter structure (ERMES) or MDM complex, composed of MMM1, MDM10, MDM12 and MDM34. Associates with the mitochondrial outer membrane sorting assembly machinery SAM(core) complex.

It localises to the mitochondrion outer membrane. Component of the ERMES/MDM complex, which serves as a molecular tether to connect the endoplasmic reticulum and mitochondria. Components of this complex are involved in the control of mitochondrial shape and protein biogenesis and may function in phospholipid exchange. MDM10 is involved in the late assembly steps of the general translocase of the mitochondrial outer membrane (TOM complex). Functions in the TOM40-specific route of the assembly of outer membrane beta-barrel proteins, including the association of TOM40 with the receptor TOM22 and small TOM proteins. Can associate with the SAM(core) complex as well as the MDM12-MMM1 complex, both involved in late steps of the major beta-barrel assembly pathway, that is responsible for biogenesis of all outer membrane beta-barrel proteins. May act as a switch that shuttles between both complexes and channels precursor proteins into the TOM40-specific pathway. Plays a role in mitochondrial morphology and in the inheritance of mitochondria. The protein is Mitochondrial distribution and morphology protein 10 of Uncinocarpus reesii (strain UAMH 1704).